The primary structure comprises 2230 residues: Probable serine/threonine-protein kinase DDB_G0267686 (2230 aa).

Low complexity predominate over residues Met1 to Asn12. Disordered stretches follow at residues Met1–Lys22, Asn121–Asn152, Asp270–Ser352, Pro368–Ser397, Asn430–Thr451, Lys464–Ser574, Gly593–Thr620, Gln699–Ser849, and Ser915–Ser974. Over residues Asp270–Lys336 the composition is skewed to basic and acidic residues. The segment covering Asn337–Asn346 has biased composition (acidic residues). Low complexity-rich tracts occupy residues Ser375 to Ile388, Asn430 to Pro447, Asn473 to Ser574, Gly593 to Gly602, Ser610 to Ser619, and Gln699 to Leu721. Residues Lys722–Pro731 show a composition bias toward polar residues. A compositionally biased stretch (pro residues) spans Asn745–Ser754. Composition is skewed to low complexity over residues Pro755–Ser766 and Thr783–Ser818. A compositionally biased stretch (polar residues) spans Tyr840–Ser849. Residues Ser991 to Thr1119 form the RGS domain. 8 disordered regions span residues Ser1146 to Asn1181, Lys1220 to Leu1243, Leu1300 to Thr1362, Gln1506 to Gln1546, Pro1563 to Ser1611, Val1725 to Asn1771, Asn1802 to His1848, and Glu1905 to Gln1929. Composition is skewed to low complexity over residues Thr1149–Asn1181 and Ser1222–Ser1239. The segment covering Thr1324 to Val1353 has biased composition (polar residues). Low complexity-rich tracts occupy residues Gln1506 to Pro1520 and Pro1530 to Gln1546. Over residues Ser1726 to Asn1769 the composition is skewed to low complexity. The segment covering Glu1905–Thr1915 has biased composition (low complexity). The segment covering Ser1916–Gln1929 has biased composition (polar residues). In terms of domain architecture, Protein kinase spans Ile1949–Leu2208. Residues Leu1955–Val1963 and Lys1976 contribute to the ATP site. Catalysis depends on Asp2069, which acts as the Proton acceptor.

It belongs to the protein kinase superfamily. TKL Ser/Thr protein kinase family.

It catalyses the reaction L-seryl-[protein] + ATP = O-phospho-L-seryl-[protein] + ADP + H(+). The catalysed reaction is L-threonyl-[protein] + ATP = O-phospho-L-threonyl-[protein] + ADP + H(+). The protein is Probable serine/threonine-protein kinase DDB_G0267686 of Dictyostelium discoideum (Social amoeba).